Here is a 137-residue protein sequence, read N- to C-terminus: NADPH-dependent 7-cyano-7-deazaguanine reductase (137 aa).

The active-site Thioimide intermediate is the C50. The active-site Proton donor is D57. Substrate is bound by residues 72–74 and 91–92; these read VEL and HE.

This sequence belongs to the GTP cyclohydrolase I family. QueF type 1 subfamily.

It is found in the cytoplasm. It catalyses the reaction 7-aminomethyl-7-carbaguanine + 2 NADP(+) = 7-cyano-7-deazaguanine + 2 NADPH + 3 H(+). Its pathway is tRNA modification; tRNA-queuosine biosynthesis. Functionally, catalyzes the NADPH-dependent reduction of 7-cyano-7-deazaguanine (preQ0) to 7-aminomethyl-7-deazaguanine (preQ1). The polypeptide is NADPH-dependent 7-cyano-7-deazaguanine reductase (Synechocystis sp. (strain ATCC 27184 / PCC 6803 / Kazusa)).